A 150-amino-acid chain; its full sequence is Large ribosomal subunit protein bL9 (150 aa).

It belongs to the bacterial ribosomal protein bL9 family.

Binds to the 23S rRNA. This Alkalilimnicola ehrlichii (strain ATCC BAA-1101 / DSM 17681 / MLHE-1) protein is Large ribosomal subunit protein bL9.